The chain runs to 308 residues: Baculoviral IAP repeat-containing protein bir-2 (308 aa).

2 BIR repeats span residues 27–98 (RFAS…EFVM) and 170–241 (RLAT…DFIK). 8 residues coordinate Zn(2+): C68, C71, H87, C94, C211, C214, H230, and C237.

It belongs to the IAP family.

The polypeptide is Baculoviral IAP repeat-containing protein bir-2 (Caenorhabditis elegans).